The following is an 837-amino-acid chain: Protein translocase subunit SecA (837 aa).

ATP is bound by residues Gln-85, 103 to 107, and Asp-493; that span reads GEGKT. 4 residues coordinate Zn(2+): Cys-821, Cys-823, Cys-832, and His-833.

Belongs to the SecA family. As to quaternary structure, monomer and homodimer. Part of the essential Sec protein translocation apparatus which comprises SecA, SecYEG and auxiliary proteins SecDF. Other proteins may also be involved. Requires Zn(2+) as cofactor.

The protein localises to the cell membrane. The protein resides in the cytoplasm. It catalyses the reaction ATP + H2O + cellular proteinSide 1 = ADP + phosphate + cellular proteinSide 2.. In terms of biological role, part of the Sec protein translocase complex. Interacts with the SecYEG preprotein conducting channel. Has a central role in coupling the hydrolysis of ATP to the transfer of proteins into and across the cell membrane, serving as an ATP-driven molecular motor driving the stepwise translocation of polypeptide chains across the membrane. This is Protein translocase subunit SecA from Streptococcus pneumoniae serotype 19F (strain G54).